Consider the following 320-residue polypeptide: Cytochrome f (320 aa).

The first 35 residues, 1 to 35 (MHTKNLFYSRTQQITQYLSALLMMVILTRTSISSA), serve as a signal peptide directing secretion. Residues Y36, C56, C59, and H60 each coordinate heme. The chain crosses the membrane as a helical span at residues 286–306 (VQVLLFFFASIILAQIFLVLK).

Belongs to the cytochrome f family. As to quaternary structure, the 4 large subunits of the cytochrome b6-f complex are cytochrome b6, subunit IV (17 kDa polypeptide, petD), cytochrome f and the Rieske protein, while the 4 small subunits are PetG, PetL, PetM and PetN. The complex functions as a dimer. Heme is required as a cofactor.

The protein resides in the plastid thylakoid membrane. Functionally, component of the cytochrome b6-f complex, which mediates electron transfer between photosystem II (PSII) and photosystem I (PSI), cyclic electron flow around PSI, and state transitions. The sequence is that of Cytochrome f from Cuscuta gronovii (Common dodder).